The primary structure comprises 1966 residues: Probable serine/threonine-protein kinase vps15 (1966 aa).

The 283-residue stretch at 21–303 (IVFKKSLGNA…QYFSFAHQFI (283 aa)) folds into the Protein kinase domain. ATP-binding positions include 27–35 (LGNARFLKT) and K49. D144 (proton acceptor) is an active-site residue. Residues 362–407 (PILISNNNNNNNNNNNNNNNNNNNNNNNNNNNNNNNNNQTTTTTTN) are disordered. Positions 367 to 407 (NNNNNNNNNNNNNNNNNNNNNNNNNNNNNNNNNQTTTTTTN) are enriched in low complexity. HEAT repeat units follow at residues 558–596 (CRLQ…MVQT), 604–642 (IFGQ…TAKR), 717–754 (KTNE…VVGA), and 756–793 (SLES…LGLL). 4 disordered regions span residues 916 to 937 (SFNS…TGGS), 1036 to 1062 (SSSN…TNST), 1106 to 1130 (GGIT…TGLN), and 1190 to 1263 (TSLS…NNMN). 2 stretches are compositionally biased toward low complexity: residues 1106 to 1119 (GGIT…TTLG) and 1192 to 1263 (LSNS…NNMN). WD repeat units lie at residues 1460–1499 (EHKA…KSVT), 1508–1547 (QQEG…KQKN), 1564–1605 (TTRG…DAFN), and 1610–1649 (ASLG…PLYS). Residues 1699 to 1743 (RSYEQPPQQQPQQPQPPQQQQQQQSQMNRSINMTSSTTTTTTSSY) form a disordered region. 2 stretches are compositionally biased toward low complexity: residues 1703–1722 (QPPQ…QQQQ) and 1732–1742 (TSSTTTTTTSS). WD repeat units lie at residues 1790–1829 (KPTP…QSYY) and 1935–1966 (HHQE…KVWK).

Belongs to the protein kinase superfamily. Ser/Thr protein kinase family.

It carries out the reaction L-seryl-[protein] + ATP = O-phospho-L-seryl-[protein] + ADP + H(+). The catalysed reaction is L-threonyl-[protein] + ATP = O-phospho-L-threonyl-[protein] + ADP + H(+). The chain is Probable serine/threonine-protein kinase vps15 (vps15) from Dictyostelium discoideum (Social amoeba).